A 460-amino-acid polypeptide reads, in one-letter code: MLTIYNTLSKTKEVFKPLDGNKVRMYVCGMTVYDYCHLGHGRSMVAFDLVTRWLRKSGYELTYVRNITDIDDKIINRANENGETFDALTARMIDAMHEDERRLNILKPDQEPRATDHIAGMHAMIQTLIDKGYAYAPGNGDVYYRVGKFVGYGKLSRKKIEDLRIGARIEVDEAKQDPLDFVLWKGVKPGEPYWDSPWGPGRPGWHIECSVMSTCCLGESFDIHGGGSDLEFPHHENEIAQSEAATGKQYANAWMHCGMIRINGEKMSKSLNNFFTIRDVLDVYHPEVVRYLLVASHYRSAINYSEDSLRDAKGALERFYHALRGLPRVAAKGGEEFVERFSVAMNDDFGTPEACAVLFDLVREINRLRDSDPDAAAGLAGRLRELGDVLGVLQLEADDFLRAGAEGKVDAAEVEALIQARLQARADKNWAESDRIRDQLTAMGVVLEDSKGATTWRLAD.

Cys28 is a binding site for Zn(2+). Residues 30–40 (MTVYDYCHLGH) carry the 'HIGH' region motif. Zn(2+) is bound by residues Cys209, His234, and Glu238. Positions 266–270 (KMSKS) match the 'KMSKS' region motif. Lys269 contacts ATP.

Belongs to the class-I aminoacyl-tRNA synthetase family. In terms of assembly, monomer. Requires Zn(2+) as cofactor.

It is found in the cytoplasm. The enzyme catalyses tRNA(Cys) + L-cysteine + ATP = L-cysteinyl-tRNA(Cys) + AMP + diphosphate. This Pseudomonas putida (strain W619) protein is Cysteine--tRNA ligase.